The following is a 92-amino-acid chain: Small ribosomal subunit protein bS20 (92 aa).

The disordered stretch occupies residues 1–23 (MANTPSAKKRAKQAEKRRSHNAS). Basic residues predominate over residues 7-20 (AKKRAKQAEKRRSH).

Belongs to the bacterial ribosomal protein bS20 family.

Binds directly to 16S ribosomal RNA. The protein is Small ribosomal subunit protein bS20 of Pseudomonas fluorescens (strain SBW25).